A 583-amino-acid polypeptide reads, in one-letter code: Propane 2-monooxygenase operon transcriptional activator MimR (583 aa).

Residues 320-513 (LAGQSSSFRR…LRHVLTETVR (194 aa)) form the Sigma-54 factor interaction domain. ATP is bound by residues 349 to 356 (ERGSGRTY) and 395 to 404 (SADFAVIVSD).

Functionally, acts as a transcriptional activator of the mimABCD operon encoding the propane 2-monooxygenase complex. In Mycolicibacterium smegmatis (strain ATCC 700084 / mc(2)155) (Mycobacterium smegmatis), this protein is Propane 2-monooxygenase operon transcriptional activator MimR.